Here is a 385-residue protein sequence, read N- to C-terminus: Podocin (385 aa).

Basic and acidic residues predominate over residues 1–27 (MDSRARSSSREAHGRSSRSSSRDDKKA). A disordered region spans residues 1 to 64 (MDSRARSSSR…GEPRAPAATA (64 aa)). Topologically, residues 1–104 (MDSRARSSSR…IKPSGLGACE (104 aa)) are cytoplasmic. Residue Cys-103 is the site of S-palmitoyl cysteine attachment. A helical membrane pass occupies residues 105–125 (WLLVLASLIFIIMTFPFSIWF). Residues 126-385 (CIKVVQEYER…NPKKKDSPML (260 aa)) are Extracellular-facing. Positions 357-370 (NRAQGSINYPSSSK) are enriched in polar residues. The disordered stretch occupies residues 357 to 385 (NRAQGSINYPSSSKPVEPLNPKKKDSPML). Residues 376 to 385 (NPKKKDSPML) show a composition bias toward basic and acidic residues.

It belongs to the band 7/mec-2 family. Interacts with nephrin/NPHS1, KIRRL1 and CD2AP. Interacts with DDN.

Its subcellular location is the membrane. In terms of biological role, plays a role in the regulation of glomerular permeability, acting probably as a linker between the plasma membrane and the cytoskeleton. The protein is Podocin (Nphs2) of Mus musculus (Mouse).